The chain runs to 535 residues: ATP-dependent RNA helicase DBP3 (535 aa).

The span at 1 to 21 (MGSSSKSEKRKYDDGEELLER) shows a compositional bias: basic and acidic residues. The tract at residues 1–96 (MGSSSKSEKR…TSYGYVQSSK (96 aa)) is disordered. Residues 35-54 (KKDKKEKKDKKEKKDKKEKK) show a composition bias toward basic residues. Residues 55-72 (DKKEKNKESKEAEARDDS) are compositionally biased toward basic and acidic residues. A compositionally biased stretch (low complexity) spans 79–88 (SSSSSTESTS). The Q motif motif lies at 128-154 (LSFDQIKLQKDVSSKLTKFPKPTPIQS). In terms of domain architecture, Helicase ATP-binding spans 157-329 (WPFLLDGKDV…NNFMNQPVKV (173 aa)). Residue 170–177 (AETGSGKT) participates in ATP binding. A DEAD box motif is present at residues 276–279 (DEAD). A Helicase C-terminal domain is found at 362–508 (NLLQKYQNTG…PVPEALLKYG (147 aa)).

The protein belongs to the DEAD box helicase family. DDX5/DBP2 subfamily.

It is found in the nucleus. Its subcellular location is the nucleolus. It carries out the reaction ATP + H2O = ADP + phosphate + H(+). Its function is as follows. ATP-dependent RNA helicase required for 60S ribosomal subunit synthesis. Involved in efficient pre-rRNA processing, predominantly at site A3, which is necessary for the normal formation of 25S and 5.8S rRNAs. This Lodderomyces elongisporus (strain ATCC 11503 / CBS 2605 / JCM 1781 / NBRC 1676 / NRRL YB-4239) (Yeast) protein is ATP-dependent RNA helicase DBP3 (DBP3).